We begin with the raw amino-acid sequence, 346 residues long: Holliday junction branch migration complex subunit RuvB (346 aa).

Residues 1 to 183 (MTEQRIIASS…FGIVQRLEFY (183 aa)) are large ATPase domain (RuvB-L). ATP is bound by residues I22, R23, G64, K67, T68, T69, 130–132 (EDF), R173, Y183, and R220. T68 contributes to the Mg(2+) binding site. The small ATPAse domain (RuvB-S) stretch occupies residues 184–254 (SPQELTRIVS…VAQAAMQMLK (71 aa)). The interval 257 to 346 (PEGFDELDRR…PGIGEPGDLF (90 aa)) is head domain (RuvB-H). Residues R293, R312, and R317 each contribute to the DNA site.

Belongs to the RuvB family. In terms of assembly, homohexamer. Forms an RuvA(8)-RuvB(12)-Holliday junction (HJ) complex. HJ DNA is sandwiched between 2 RuvA tetramers; dsDNA enters through RuvA and exits via RuvB. An RuvB hexamer assembles on each DNA strand where it exits the tetramer. Each RuvB hexamer is contacted by two RuvA subunits (via domain III) on 2 adjacent RuvB subunits; this complex drives branch migration. In the full resolvosome a probable DNA-RuvA(4)-RuvB(12)-RuvC(2) complex forms which resolves the HJ.

Its subcellular location is the cytoplasm. The enzyme catalyses ATP + H2O = ADP + phosphate + H(+). Its function is as follows. The RuvA-RuvB-RuvC complex processes Holliday junction (HJ) DNA during genetic recombination and DNA repair, while the RuvA-RuvB complex plays an important role in the rescue of blocked DNA replication forks via replication fork reversal (RFR). RuvA specifically binds to HJ cruciform DNA, conferring on it an open structure. The RuvB hexamer acts as an ATP-dependent pump, pulling dsDNA into and through the RuvAB complex. RuvB forms 2 homohexamers on either side of HJ DNA bound by 1 or 2 RuvA tetramers; 4 subunits per hexamer contact DNA at a time. Coordinated motions by a converter formed by DNA-disengaged RuvB subunits stimulates ATP hydrolysis and nucleotide exchange. Immobilization of the converter enables RuvB to convert the ATP-contained energy into a lever motion, pulling 2 nucleotides of DNA out of the RuvA tetramer per ATP hydrolyzed, thus driving DNA branch migration. The RuvB motors rotate together with the DNA substrate, which together with the progressing nucleotide cycle form the mechanistic basis for DNA recombination by continuous HJ branch migration. Branch migration allows RuvC to scan DNA until it finds its consensus sequence, where it cleaves and resolves cruciform DNA. The chain is Holliday junction branch migration complex subunit RuvB from Xanthomonas euvesicatoria pv. vesicatoria (strain 85-10) (Xanthomonas campestris pv. vesicatoria).